The following is a 334-amino-acid chain: MKNNNSGKTSLYPEEKEEKILVDPYGRKVTGLRISITDRCNLSCMYCHNEGADCCSCGSLGHEMSPELICGIVREAAKFGVRKVKFSGGEPLFRKDFEEILACLPPLKEVSATTNGILLEKRAKTLKAAGLDRVNVSLDSLNPEKYGKITGAPPGTLEKVIKGIDSAVEAGLTPVKLNMVLLKGVNDNEIDAMMEFIRPYGGKVILQLIELMNIDPQLSKYMIDSKALEKILEERASEVRVRHLHHRKKYIIDGVEVEFVRPMDNSEFCAHCSRLRVTADGKFKPCLLVHDNLVDVREAKSPKEIEKLLRLAVSRRKPYYIPATGVTKLEKWQE.

The 233-residue stretch at 24–256 folds into the Radical SAM core domain; that stretch reads PYGRKVTGLR…RKKYIIDGVE (233 aa). GTP is bound at residue Arg-33. [4Fe-4S] cluster-binding residues include Cys-40 and Cys-44. Residue Tyr-46 participates in S-adenosyl-L-methionine binding. Cys-47 lines the [4Fe-4S] cluster pocket. Position 85 (Lys-85) interacts with GTP. Position 89 (Gly-89) interacts with S-adenosyl-L-methionine. Thr-113 serves as a coordination point for GTP. Ser-137 lines the S-adenosyl-L-methionine pocket. Lys-176 is a binding site for GTP. Residues Cys-269 and Cys-272 each contribute to the [4Fe-4S] cluster site. 274 to 276 provides a ligand contact to GTP; the sequence is RLR. Cys-286 contributes to the [4Fe-4S] cluster binding site.

The protein belongs to the radical SAM superfamily. MoaA family. Requires [4Fe-4S] cluster as cofactor.

The catalysed reaction is GTP + AH2 + S-adenosyl-L-methionine = (8S)-3',8-cyclo-7,8-dihydroguanosine 5'-triphosphate + 5'-deoxyadenosine + L-methionine + A + H(+). Its pathway is cofactor biosynthesis; molybdopterin biosynthesis. Catalyzes the cyclization of GTP to (8S)-3',8-cyclo-7,8-dihydroguanosine 5'-triphosphate. The protein is Probable GTP 3',8-cyclase of Methanosarcina acetivorans (strain ATCC 35395 / DSM 2834 / JCM 12185 / C2A).